Here is a 51-residue protein sequence, read N- to C-terminus: Small ribosomal subunit protein uS13 (51 aa).

Belongs to the universal ribosomal protein uS13 family. In terms of assembly, part of the 30S ribosomal subunit. Forms a loose heterodimer with protein S19. Forms two bridges to the 50S subunit in the 70S ribosome.

Located at the top of the head of the 30S subunit, it contacts several helices of the 16S rRNA. In the 70S ribosome it contacts the 23S rRNA (bridge B1a) and protein L5 of the 50S subunit (bridge B1b), connecting the 2 subunits; these bridges are implicated in subunit movement. Contacts the tRNAs in the A and P-sites. This chain is Small ribosomal subunit protein uS13 (rpsM), found in Lactococcus lactis subsp. cremoris (Streptococcus cremoris).